The primary structure comprises 548 residues: ATP synthase subunit alpha (548 aa).

172 to 179 (GDRKTGKT) is a binding site for ATP. The interval 526-548 (AEAMDEADVEKESVKVRKPAPKK) is disordered.

The protein belongs to the ATPase alpha/beta chains family. In terms of assembly, F-type ATPases have 2 components, CF(1) - the catalytic core - and CF(0) - the membrane proton channel. CF(1) has five subunits: alpha(3), beta(3), gamma(1), delta(1), epsilon(1). CF(0) has three main subunits: a(1), b(2) and c(9-12). The alpha and beta chains form an alternating ring which encloses part of the gamma chain. CF(1) is attached to CF(0) by a central stalk formed by the gamma and epsilon chains, while a peripheral stalk is formed by the delta and b chains.

The protein resides in the cell membrane. It catalyses the reaction ATP + H2O + 4 H(+)(in) = ADP + phosphate + 5 H(+)(out). In terms of biological role, produces ATP from ADP in the presence of a proton gradient across the membrane. The alpha chain is a regulatory subunit. This chain is ATP synthase subunit alpha, found in Mycolicibacterium gilvum (strain PYR-GCK) (Mycobacterium gilvum (strain PYR-GCK)).